Here is a 692-residue protein sequence, read N- to C-terminus: Elongation factor G 1 (692 aa).

The region spanning 8 to 283 (EKTRNIGIMA…SVVEYLPSPV (276 aa)) is the tr-type G domain. GTP contacts are provided by residues 17–24 (AHIDAGKT), 81–85 (DTPGH), and 135–138 (NKMD).

Belongs to the TRAFAC class translation factor GTPase superfamily. Classic translation factor GTPase family. EF-G/EF-2 subfamily.

It is found in the cytoplasm. Catalyzes the GTP-dependent ribosomal translocation step during translation elongation. During this step, the ribosome changes from the pre-translocational (PRE) to the post-translocational (POST) state as the newly formed A-site-bound peptidyl-tRNA and P-site-bound deacylated tRNA move to the P and E sites, respectively. Catalyzes the coordinated movement of the two tRNA molecules, the mRNA and conformational changes in the ribosome. This Geobacter metallireducens (strain ATCC 53774 / DSM 7210 / GS-15) protein is Elongation factor G 1.